Reading from the N-terminus, the 309-residue chain is Olfactory receptor 10J5 (309 aa).

At Met1–Ile25 the chain is on the extracellular side. Asn5 carries N-linked (GlcNAc...) asparagine glycosylation. The helical transmembrane segment at Thr26–Val46 threads the bilayer. The Cytoplasmic portion of the chain corresponds to Thr47–His54. A helical transmembrane segment spans residues Leu55–Leu75. Residues Val76–Thr99 lie on the Extracellular side of the membrane. A disulfide bond links Cys97 and Cys188. Residues Gln100 to Tyr120 form a helical membrane-spanning segment. At Asp121 to Gly139 the chain is on the cytoplasmic side. The chain crosses the membrane as a helical span at residues Leu140–Val160. Residues Thr161 to Ile196 lie on the Extracellular side of the membrane. Residues Ile197–Ser216 form a helical membrane-spanning segment. At Tyr217–Thr236 the chain is on the cytoplasmic side. A helical transmembrane segment spans residues Phe237–Ala257. At Tyr258–Asp270 the chain is on the extracellular side. Residues Leu271–Leu291 traverse the membrane as a helical segment. Topologically, residues Arg292–Ser309 are cytoplasmic.

This sequence belongs to the G-protein coupled receptor 1 family. As to expression, expressed in both the aorta, the coronary artery and umbilical vein endothelial cells (HUVECs) (at protein level).

It is found in the cell membrane. Its function is as follows. Olfactory receptor. Activated by the synthetic floral odorant, lyral, and by alpha-cedrene, a sesquiterpene constituent of cedarwood oil. Its activation increases intracellular Ca(2+). Acts as a key regulator of myogenesis through its actions on cell migration and adhesion by activating the Ca(2+)-dependent AKT signal transduction pathway. Also acts as a regulator of angiogenesis. Moreover, plays a role in the regulation of lipid accumulation in hepatocytes via the cAMP-PKA pathway. May be involved in sperm chemotaxis and motility. This Homo sapiens (Human) protein is Olfactory receptor 10J5.